An 88-amino-acid chain; its full sequence is Small ribosomal subunit protein uS15 (88 aa).

This sequence belongs to the universal ribosomal protein uS15 family. As to quaternary structure, part of the 30S ribosomal subunit. Forms a bridge to the 50S subunit in the 70S ribosome, contacting the 23S rRNA.

Its function is as follows. One of the primary rRNA binding proteins, it binds directly to 16S rRNA where it helps nucleate assembly of the platform of the 30S subunit by binding and bridging several RNA helices of the 16S rRNA. In terms of biological role, forms an intersubunit bridge (bridge B4) with the 23S rRNA of the 50S subunit in the ribosome. The protein is Small ribosomal subunit protein uS15 of Caldicellulosiruptor saccharolyticus (strain ATCC 43494 / DSM 8903 / Tp8T 6331).